The sequence spans 52 residues: Proteinase inhibitor (52 aa).

Position 1 is a pyrrolidone carboxylic acid (Q1). 4 disulfides stabilise this stretch: C3/C40, C6/C24, C7/C36, and C13/C49.

This sequence belongs to the protease inhibitor I20 (potato type II proteinase inhibitor) family.

The protein localises to the secreted. This Solanum melongena (Eggplant) protein is Proteinase inhibitor.